Consider the following 143-residue polypeptide: uncharacterized protein (143 aa).

An N-terminal signal peptide occupies residues 1-24; that stretch reads MKKMLMLAFTFLLALTIHVGEASA.

This is an uncharacterized protein from Bacillus subtilis (strain 168).